The primary structure comprises 292 residues: Feruloyl esterase B (292 aa).

An N-terminal signal peptide occupies residues 1–18 (MLPRTLLGLALTAATGLC). N-linked (GlcNAc...) asparagine glycans are attached at residues Asn-88, Asn-117, Asn-179, and Asn-245.

This sequence belongs to the carbohydrate esterase 1 (CE1) family. Feruloyl esterase type B subfamily.

The protein resides in the secreted. The catalysed reaction is feruloyl-polysaccharide + H2O = ferulate + polysaccharide.. Functionally, involved in degradation of plant cell walls. Hydrolyzes of the feruloyl-arabinose ester bond in arabinoxylans as well as the feruloyl-galactose and feruloyl-arabinose ester bonds in pectin. The chain is Feruloyl esterase B (fae-1) from Neurospora crassa (strain ATCC 24698 / 74-OR23-1A / CBS 708.71 / DSM 1257 / FGSC 987).